The following is a 264-amino-acid chain: Iodotyrosine deiodinase (264 aa).

Residues 75-79 and 103-104 contribute to the FMN site; these read RRTVR and SG. 3-iodo-L-tyrosine-binding residues include A105, E132, Y136, and K157. FMN contacts are provided by residues 212–214 and R254; that span reads TST.

The protein belongs to the nitroreductase family. FMN serves as cofactor.

It catalyses the reaction 2 iodide + L-tyrosine + 2 NADP(+) = 3,5-diiodo-L-tyrosine + 2 NADPH + H(+). The catalysed reaction is iodide + L-tyrosine + NADP(+) = 3-iodo-L-tyrosine + NADPH. It carries out the reaction 3-iodo-L-tyrosine + iodide + NADP(+) = 3,5-diiodo-L-tyrosine + NADPH + H(+). The enzyme catalyses L-tyrosine + chloride + NADP(+) = 3-chloro-L-tyrosine + NADPH. It catalyses the reaction bromide + L-tyrosine + NADP(+) = 3-bromo-L-tyrosine + NADPH. Its function is as follows. Catalyzes the dehalogenation of halotyrosines such as 3,5-diiodo-L-tyrosine. Likely to also catalyze the dehalogenation of other halotyrosines such as 3-bromo-L-tyrosine, 3-chloro-L-tyrosine and 3-iodo-L-tyrosine. In Nematostella vectensis (Starlet sea anemone), this protein is Iodotyrosine deiodinase.